An 884-amino-acid chain; its full sequence is Valine--tRNA ligase (884 aa).

The 'HIGH' region motif lies at 47–57 (PNVTGALHIGH). The 'KMSKS' region motif lies at 525 to 529 (KMSKS). Lysine 528 contributes to the ATP binding site. A coiled-coil region spans residues 812 to 884 (AVDFEAELAR…QQRFRDAIGK (73 aa)).

This sequence belongs to the class-I aminoacyl-tRNA synthetase family. ValS type 1 subfamily. Monomer.

Its subcellular location is the cytoplasm. The enzyme catalyses tRNA(Val) + L-valine + ATP = L-valyl-tRNA(Val) + AMP + diphosphate. Its function is as follows. Catalyzes the attachment of valine to tRNA(Val). As ValRS can inadvertently accommodate and process structurally similar amino acids such as threonine, to avoid such errors, it has a 'posttransfer' editing activity that hydrolyzes mischarged Thr-tRNA(Val) in a tRNA-dependent manner. The polypeptide is Valine--tRNA ligase (Nitratidesulfovibrio vulgaris (strain ATCC 29579 / DSM 644 / CCUG 34227 / NCIMB 8303 / VKM B-1760 / Hildenborough) (Desulfovibrio vulgaris)).